A 96-amino-acid polypeptide reads, in one-letter code: uncharacterized protein (96 aa).

2 helical membrane passes run 27-47 and 52-72; these read LYTV…FFFF and MSAG…RPTI.

It is found in the cell membrane. This is an uncharacterized protein from Bacillus subtilis (strain 168).